A 534-amino-acid chain; its full sequence is Corneodesmosin (534 aa).

The first 32 residues, 1 to 32, serve as a signal peptide directing secretion; it reads MGLSRAPWMGRVGGRGMMALLLAGLLLPGTLA. Disordered stretches follow at residues 38–252 and 396–497; these read FSDP…HSVS and CSPF…GSAG. Composition is skewed to low complexity over residues 64–82, 107–185, 200–236, 397–415, and 431–446; these read GFSS…SSAS, GYSQ…SGSA, SQLG…SGGP, SPFS…SSGS, and PGTG…QSSG. A compositionally biased stretch (polar residues) spans 454–472; that stretch reads GSKSSSSGHPCMSVSSLTL.

Its subcellular location is the secreted. Functionally, important for the epidermal barrier integrity. This Macaca mulatta (Rhesus macaque) protein is Corneodesmosin (CDSN).